The primary structure comprises 74 residues: Large ribosomal subunit protein uL29 (74 aa).

It belongs to the universal ribosomal protein uL29 family.

This chain is Large ribosomal subunit protein uL29, found in Streptomyces griseus subsp. griseus (strain JCM 4626 / CBS 651.72 / NBRC 13350 / KCC S-0626 / ISP 5235).